A 67-amino-acid chain; its full sequence is Large ribosomal subunit protein uL29 (67 aa).

The protein belongs to the universal ribosomal protein uL29 family.

The protein is Large ribosomal subunit protein uL29 of Alkaliphilus metalliredigens (strain QYMF).